The chain runs to 417 residues: D-amino acid dehydrogenase (417 aa).

Residue 3 to 17 (VVILGSGVVGVSTAW) coordinates FAD.

Belongs to the DadA oxidoreductase family. The cofactor is FAD.

The enzyme catalyses a D-alpha-amino acid + A + H2O = a 2-oxocarboxylate + AH2 + NH4(+). The protein operates within amino-acid degradation; D-alanine degradation; NH(3) and pyruvate from D-alanine: step 1/1. Its function is as follows. Oxidative deamination of D-amino acids. This Pectobacterium carotovorum subsp. carotovorum (strain PC1) protein is D-amino acid dehydrogenase.